The primary structure comprises 601 residues: MEGTDLLLAGVLFLFAAVVAVPLAARLGIGAVLGYLLAGIAIGPWGLGFISDVDEILHFSELGVVFLMFIIGLELNPAKLWQLRRSIFGVGAAQVLFSAVILGGLLMLTQFKWQAAVIGGIGLAMSSTAMALQLMRDKGMNRNESGQLGFSVLLFQDLAVIPALALVPLLAGSGDDHFDWMKVGMKVLAFVGMLIGGRYLLRPVFRFIAASGVREVFTAATLLLVLGSALFMDALGLSMALGTFIAGILLAESEYRHELEIAIDPFKGLLLGLFFISVGMALNLGVLYTHLLWVVVSVAVLVAVKTGVLYTLARIYGLRSSERMQFAGVLSQGGEFAFVLFSTAASQRLFQDDQMALLLVTVTLSMMTTPLLMKLIDKLLSRRFNQPDDEDEAPWVEDDKPQVIVVGFGRFGQVIGRLLMANKMRITVLERDISAVNLMRKYGYKVYYGDATQLELLRSAGAEAAESIIITCNEPEDTMKLVELCQQHFPHLHILARARGRVEAHELLQAGVTNFSRETFSSALELGRKALVSLGMHPHQAQRAQMHFRRLDMRMLRELMPVHSDTAQISRVREARRELEEIFQREMQQERRQFDGWDEFE.

Transmembrane regions (helical) follow at residues 5 to 25 (DLLL…PLAA), 29 to 49 (IGAV…GLGF), 55 to 75 (EILH…GLEL), 87 to 107 (IFGV…GLLM), 115 to 135 (AAVI…LQLM), 152 to 172 (VLLF…LLAG), 177 to 197 (HFDW…LIGG), 207 to 227 (FIAA…LVLG), 230 to 250 (LFMD…GILL), 261 to 281 (IAID…VGMA), 284 to 304 (LGVL…LVAV), 326 to 346 (FAGV…TAAS), and 356 to 376 (ALLL…MKLI). The RCK N-terminal domain occupies 400 to 518 (KPQVIVVGFG…QAGVTNFSRE (119 aa)).

This sequence belongs to the monovalent cation:proton antiporter 2 (CPA2) transporter (TC 2.A.37) family. KefB subfamily. In terms of assembly, interacts with the regulatory subunit KefG.

It is found in the cell inner membrane. Its function is as follows. Pore-forming subunit of a potassium efflux system that confers protection against electrophiles. Catalyzes K(+)/H(+) antiport. In Enterobacter sp. (strain 638), this protein is Glutathione-regulated potassium-efflux system protein KefB.